An 85-amino-acid polypeptide reads, in one-letter code: Putative membrane protein insertion efficiency factor (85 aa).

It belongs to the UPF0161 family.

It localises to the cell inner membrane. Could be involved in insertion of integral membrane proteins into the membrane. The polypeptide is Putative membrane protein insertion efficiency factor (Vibrio atlanticus (strain LGP32) (Vibrio splendidus (strain Mel32))).